Reading from the N-terminus, the 283-residue chain is Phytanoyl-CoA dioxygenase (283 aa).

Residues K99, M138, 153-155 (HQD), and W170 each bind 2-oxoglutarate. H153 and D155 together coordinate Fe cation. A Fe cation-binding site is contributed by H238. Residues S240 and R249 each coordinate 2-oxoglutarate.

It belongs to the PhyH family. It depends on Fe cation as a cofactor. L-ascorbate is required as a cofactor.

It carries out the reaction phytanoyl-CoA + 2-oxoglutarate + O2 = 2-hydroxyphytanoyl-CoA + succinate + CO2. Its pathway is lipid metabolism; fatty acid metabolism. Converts phytanoyl-CoA to 2-hydroxyphytanoyl-CoA. This chain is Phytanoyl-CoA dioxygenase, found in Arabidopsis thaliana (Mouse-ear cress).